Here is a 549-residue protein sequence, read N- to C-terminus: Lipase 5 (549 aa).

A signal peptide spans 1 to 15 (MKLALALSLIASVAA). A disulfide bond links Cys75 and Cys112. Ser224 acts as the Acyl-ester intermediate in catalysis. Cysteines 283 and 292 form a disulfide. Asn329 is a glycosylation site (N-linked (GlcNAc...) asparagine). Residue Glu356 is the Charge relay system of the active site. N-linked (GlcNAc...) asparagine glycosylation occurs at Asn366. The active-site Charge relay system is the His464.

The protein belongs to the type-B carboxylesterase/lipase family.

It catalyses the reaction a triacylglycerol + H2O = a diacylglycerol + a fatty acid + H(+). This is Lipase 5 (LIP5) from Diutina rugosa (Yeast).